A 347-amino-acid polypeptide reads, in one-letter code: Heat-inducible transcription repressor HrcA (347 aa).

It belongs to the HrcA family.

Negative regulator of class I heat shock genes (grpE-dnaK-dnaJ and groELS operons). Prevents heat-shock induction of these operons. This is Heat-inducible transcription repressor HrcA from Nocardia farcinica (strain IFM 10152).